Here is a 251-residue protein sequence, read N- to C-terminus: tRNA (guanine-N(7)-)-methyltransferase (251 aa).

S-adenosyl-L-methionine contacts are provided by glutamate 80, glutamate 105, aspartate 132, and aspartate 155. Aspartate 155 is a catalytic residue. Substrate contacts are provided by residues lysine 159, aspartate 191, and threonine 228–glutamate 231.

Belongs to the class I-like SAM-binding methyltransferase superfamily. TrmB family.

The catalysed reaction is guanosine(46) in tRNA + S-adenosyl-L-methionine = N(7)-methylguanosine(46) in tRNA + S-adenosyl-L-homocysteine. Its pathway is tRNA modification; N(7)-methylguanine-tRNA biosynthesis. Functionally, catalyzes the formation of N(7)-methylguanine at position 46 (m7G46) in tRNA. The chain is tRNA (guanine-N(7)-)-methyltransferase from Histophilus somni (strain 2336) (Haemophilus somnus).